The following is a 260-amino-acid chain: MAIQHPYHLVDQSPWPLDGAFSGLMMTSGNVLWFHTQKTNLTLVGFLLLITNMVNWWRDIIRKANFQGSHTAIVNKGMRYGMILFITSEVCFFFAFFWAFFHSSLAPSVEIGVAWPPSGITPLNPFLVPLLNTGVLLSSGVTLSWSHHSILAGNRTESIQALFLTVALGSYFTALQAWEYIDAPFTIADSVYGSTFFVATGFHGLQVIIGTTFLMVCLFRTAGRHFSTHHHFGFEAAAWYWHFVDVVWFVLYWLIYWWGA.

A run of 6 helical transmembrane segments spans residues 41-61, 81-101, 133-153, 161-181, 196-216, and 238-258; these read LTLV…RDII, GMIL…WAFF, TGVL…ILAG, ALFL…WEYI, FFVA…FLMV, and AWYW…IYWW.

It belongs to the cytochrome c oxidase subunit 3 family. In terms of assembly, component of the cytochrome c oxidase (complex IV, CIV), a multisubunit enzyme composed of a catalytic core of 3 subunits and several supernumerary subunits. The complex exists as a monomer or a dimer and forms supercomplexes (SCs) in the inner mitochondrial membrane with ubiquinol-cytochrome c oxidoreductase (cytochrome b-c1 complex, complex III, CIII).

The protein resides in the mitochondrion inner membrane. It carries out the reaction 4 Fe(II)-[cytochrome c] + O2 + 8 H(+)(in) = 4 Fe(III)-[cytochrome c] + 2 H2O + 4 H(+)(out). In terms of biological role, component of the cytochrome c oxidase, the last enzyme in the mitochondrial electron transport chain which drives oxidative phosphorylation. The respiratory chain contains 3 multisubunit complexes succinate dehydrogenase (complex II, CII), ubiquinol-cytochrome c oxidoreductase (cytochrome b-c1 complex, complex III, CIII) and cytochrome c oxidase (complex IV, CIV), that cooperate to transfer electrons derived from NADH and succinate to molecular oxygen, creating an electrochemical gradient over the inner membrane that drives transmembrane transport and the ATP synthase. Cytochrome c oxidase is the component of the respiratory chain that catalyzes the reduction of oxygen to water. Electrons originating from reduced cytochrome c in the intermembrane space (IMS) are transferred via the dinuclear copper A center (CU(A)) of subunit 2 and heme A of subunit 1 to the active site in subunit 1, a binuclear center (BNC) formed by heme A3 and copper B (CU(B)). The BNC reduces molecular oxygen to 2 water molecules using 4 electrons from cytochrome c in the IMS and 4 protons from the mitochondrial matrix. The protein is Cytochrome c oxidase subunit 3 (COIII) of Strongylocentrotus purpuratus (Purple sea urchin).